The chain runs to 546 residues: Thermolysin (546 aa).

The signal sequence occupies residues 1–25 (MDKRAMLGAIGLAFGLMAWPFGASA). Residues 26–228 (KEKSMVWNEQ…EAKPGGGQPV (203 aa)) constitute a propeptide, activation peptide. Ca(2+) is bound by residues Asp-287, Asp-289, Gln-291, and Asp-368. His-372 provides a ligand contact to Zn(2+). Glu-373 is an active-site residue. Zn(2+) contacts are provided by His-376 and Glu-396. Ca(2+) contacts are provided by Asn-413, Asp-415, Glu-417, Glu-420, Tyr-423, Thr-424, Ile-427, and Asp-430. The active-site Proton donor is His-461.

Belongs to the peptidase M4 family. Ca(2+) is required as a cofactor. Requires Zn(2+) as cofactor.

The protein resides in the secreted. It catalyses the reaction Preferential cleavage: Xaa-|-Leu &gt; Xaa-|-Phe.. In terms of biological role, extracellular zinc metalloprotease. Has collagenase activity. This chain is Thermolysin (npr), found in Bacillus sp. (strain EA1).